A 209-amino-acid chain; its full sequence is Pyrrolidone-carboxylate peptidase (209 aa).

Catalysis depends on residues E79, C142, and H164.

It belongs to the peptidase C15 family. As to quaternary structure, homotetramer.

It localises to the cytoplasm. The enzyme catalyses Release of an N-terminal pyroglutamyl group from a polypeptide, the second amino acid generally not being Pro.. In terms of biological role, removes 5-oxoproline from various penultimate amino acid residues except L-proline. In Saccharolobus islandicus (strain L.S.2.15 / Lassen #1) (Sulfolobus islandicus), this protein is Pyrrolidone-carboxylate peptidase.